A 486-amino-acid polypeptide reads, in one-letter code: uncharacterized protein (486 aa).

Residues 18–38 (TLLQLFVFTVICVFVLSGLAI) traverse the membrane as a helical segment. Residues 62 to 79 (DRQKQMEKQQDSGEKRSF) show a composition bias toward basic and acidic residues. 2 disordered regions span residues 62–82 (DRQK…FEST) and 117–147 (IESS…GPQM). Residues 119 to 132 (SSSSSDSSSSSSSS) show a composition bias toward low complexity. Helical transmembrane passes span 324-344 (VVYL…MMSI), 365-385 (IGQF…LASV), and 451-471 (MLIL…LPSI).

Belongs to the ABC-4 integral membrane protein family.

Its subcellular location is the cell membrane. This is an uncharacterized protein from Bacillus subtilis (strain 168).